Here is a 379-residue protein sequence, read N- to C-terminus: Cytochrome b (379 aa).

Helical transmembrane passes span 33–53 (FGSLLGLCLITQIVTGLFLAM), 77–98 (WFLRNIHANGASLFFICLYLHI), 113–133 (WNVGVVLFLLVMMTAFVGYVL), and 178–198 (FFTFHFLFPFVIAGASMIHLL). His83 and His97 together coordinate heme b. Heme b-binding residues include His182 and His196. His201 contacts a ubiquinone. Helical transmembrane passes span 226–246 (YKDLLGFIILLAGLMFLTLFS), 288–308 (LGGVLALLFSILILMIVPITH), 320–340 (LTQILFWTLVADMFILTWIGG), and 347–367 (FIIIGQIASIIYFALFLVFAP).

It belongs to the cytochrome b family. In terms of assembly, the cytochrome bc1 complex contains 3 respiratory subunits (MT-CYB, CYC1 and UQCRFS1), 2 core proteins (UQCRC1 and UQCRC2) and probably 6 low-molecular weight proteins. Requires heme b as cofactor.

Its subcellular location is the mitochondrion inner membrane. Its function is as follows. Component of the ubiquinol-cytochrome c reductase complex (complex III or cytochrome b-c1 complex) that is part of the mitochondrial respiratory chain. The b-c1 complex mediates electron transfer from ubiquinol to cytochrome c. Contributes to the generation of a proton gradient across the mitochondrial membrane that is then used for ATP synthesis. This chain is Cytochrome b (mt-cyb), found in Amia calva (Bowfin).